A 101-amino-acid polypeptide reads, in one-letter code: Apolipoprotein C-II (101 aa).

The N-terminal stretch at 1–22 (MGTRFLLALCLVLLVLGFEVQG) is a signal peptide. The tract at residues 66 to 74 (AVDEKLRDL) is lipid binding. Positions 78–101 (STAAMSTYTGIFTDQVLSVLKGEE) are lipoprotein lipase cofactor.

Belongs to the apolipoprotein C2 family. In terms of processing, proapolipoprotein C-II is synthesized as a sialic acid containing glycoprotein which is subsequently desialylated prior to its proteolytic processing. Proapolipoprotein C-II, the major form found in plasma undergoes proteolytic cleavage of its N-terminal hexapeptide to generate apolipoprotein C-II, which occurs as the minor form in plasma.

The protein localises to the secreted. Functionally, component of chylomicrons, very low-density lipoproteins (VLDL), low-density lipoproteins (LDL), and high-density lipoproteins (HDL) in plasma. Plays an important role in lipoprotein metabolism as an activator of lipoprotein lipase. Both proapolipoprotein C-II and apolipoprotein C-II can activate lipoprotein lipase. This chain is Apolipoprotein C-II (APOC2), found in Colobus guereza (Mantled guereza).